A 1049-amino-acid chain; its full sequence is GPI inositol-deacylase (1049 aa).

A helical transmembrane segment spans residues 39–59 (ACSAYTLVTTALGFAAFFLML). The active site involves serine 222. Transmembrane regions (helical) follow at residues 699 to 719 (LWMR…ALVL), 742 to 762 (CMYS…ITLA), 798 to 818 (PFFW…CVMV), 867 to 887 (ILLS…VLCI), 917 to 937 (SIFI…VVWI), 944 to 964 (WLTP…ILLV), 986 to 1006 (VFLF…AYVL), and 1009 to 1029 (LANI…GLAF).

Belongs to the GPI inositol-deacylase family.

Its subcellular location is the endoplasmic reticulum membrane. Functionally, involved in inositol deacylation of GPI-anchored proteins which plays important roles in the quality control and ER-associated degradation of GPI-anchored proteins. This is GPI inositol-deacylase (BST1) from Phaeosphaeria nodorum (strain SN15 / ATCC MYA-4574 / FGSC 10173) (Glume blotch fungus).